A 207-amino-acid polypeptide reads, in one-letter code: Small ribosomal subunit protein uS4A (207 aa).

Residues 98-163 (TRLDNLVYRL…SPKFKELKEN (66 aa)) enclose the S4 RNA-binding domain.

Belongs to the universal ribosomal protein uS4 family. As to quaternary structure, part of the 30S ribosomal subunit. Contacts protein S5. The interaction surface between S4 and S5 is involved in control of translational fidelity.

In terms of biological role, one of the primary rRNA binding proteins, it binds directly to 16S rRNA where it nucleates assembly of the body of the 30S subunit. Functionally, with S5 and S12 plays an important role in translational accuracy. The sequence is that of Small ribosomal subunit protein uS4A from Alkaliphilus metalliredigens (strain QYMF).